A 384-amino-acid chain; its full sequence is Succinyl-diaminopimelate desuccinylase (384 aa).

H71 lines the Zn(2+) pocket. The active site involves D73. Zn(2+) is bound at residue D104. E138 serves as the catalytic Proton acceptor. Residues E139, E167, and H357 each contribute to the Zn(2+) site.

The protein belongs to the peptidase M20A family. DapE subfamily. In terms of assembly, homodimer. Requires Zn(2+) as cofactor. The cofactor is Co(2+).

The enzyme catalyses N-succinyl-(2S,6S)-2,6-diaminopimelate + H2O = (2S,6S)-2,6-diaminopimelate + succinate. The protein operates within amino-acid biosynthesis; L-lysine biosynthesis via DAP pathway; LL-2,6-diaminopimelate from (S)-tetrahydrodipicolinate (succinylase route): step 3/3. Its function is as follows. Catalyzes the hydrolysis of N-succinyl-L,L-diaminopimelic acid (SDAP), forming succinate and LL-2,6-diaminopimelate (DAP), an intermediate involved in the bacterial biosynthesis of lysine and meso-diaminopimelic acid, an essential component of bacterial cell walls. The chain is Succinyl-diaminopimelate desuccinylase from Blochmanniella floridana.